Here is a 395-residue protein sequence, read N- to C-terminus: Protein phosphatase methylesterase 1 (395 aa).

Catalysis depends on residues serine 194, aspartate 222, and histidine 348.

This sequence belongs to the AB hydrolase superfamily.

The enzyme catalyses [phosphatase 2A protein]-C-terminal L-leucine methyl ester + H2O = [phosphatase 2A protein]-C-terminal L-leucine + methanol + H(+). Its function is as follows. Demethylates proteins that have been reversibly carboxymethylated. Demethylates the phosphatase PP2A catalytic subunit. The sequence is that of Protein phosphatase methylesterase 1 (PPE1) from Kluyveromyces lactis (strain ATCC 8585 / CBS 2359 / DSM 70799 / NBRC 1267 / NRRL Y-1140 / WM37) (Yeast).